The chain runs to 61 residues: Furostanol glycoside 26-O-beta-glucosidase (61 aa).

Asp-33 functions as the Proton donor/acceptor in the catalytic mechanism. Asp-33 is a binding site for D-glucose.

This sequence belongs to the glycosyl hydrolase 3 family. As to quaternary structure, monomer. Post-translationally, glycosylated. In terms of tissue distribution, expressed in petioles and leaves, but not in fruits.

It catalyses the reaction protodioscin + H2O = 26-deglucoprotodioscin + D-glucose. Inhibited by Hg(2+) and D-glucono-1,5-lactone. Its function is as follows. Beta-glucosidase highly specific for the cleavage of C-26-bound glucose moiety of furostanol glycosides torvosides A and H. Hydrolyzes only p-nitrophenyl-beta-glucoside, but not p-nitrophenyl-beta-D-fucoside, p-nitrophenyl-beta-L-fucoside, p-nitrophenyl-beta-D-xyloside, p-nitrophenyl-beta-D-galactoside, p-nitrophenyl-beta-D-NAc-glucosamine, p-nitrophenyl-beta-D-mannoside or any of the p-nitrophenyl-alpha-glycosides tested. This chain is Furostanol glycoside 26-O-beta-glucosidase, found in Solanum torvum (Turkey berry).